A 907-amino-acid polypeptide reads, in one-letter code: Protein translocase subunit SecA (907 aa).

ATP contacts are provided by residues glutamine 87, 105–109, and aspartate 512; that span reads GEGKT. Residues 869–897 form a disordered region; that stretch reads AESLSAHTPVVREGEKVGRNDPCPCGSGR. Basic and acidic residues predominate over residues 878–887; sequence VVREGEKVGR. Zn(2+)-binding residues include cysteine 891, cysteine 893, cysteine 902, and histidine 903.

The protein belongs to the SecA family. As to quaternary structure, monomer and homodimer. Part of the essential Sec protein translocation apparatus which comprises SecA, SecYEG and auxiliary proteins SecDF-YajC and YidC. Zn(2+) is required as a cofactor.

The protein localises to the cell inner membrane. It localises to the cytoplasm. It carries out the reaction ATP + H2O + cellular proteinSide 1 = ADP + phosphate + cellular proteinSide 2.. In terms of biological role, part of the Sec protein translocase complex. Interacts with the SecYEG preprotein conducting channel. Has a central role in coupling the hydrolysis of ATP to the transfer of proteins into and across the cell membrane, serving both as a receptor for the preprotein-SecB complex and as an ATP-driven molecular motor driving the stepwise translocation of polypeptide chains across the membrane. In Shewanella sediminis (strain HAW-EB3), this protein is Protein translocase subunit SecA.